The chain runs to 353 residues: rRNA methyltransferase 1, mitochondrial (353 aa).

A mitochondrion-targeting transit peptide spans Met-1 to Phe-20. The interval Pro-311–Gly-353 is disordered.

Belongs to the class IV-like SAM-binding methyltransferase superfamily. RNA methyltransferase TrmH family.

It is found in the mitochondrion matrix. It carries out the reaction guanosine(1145) in 16S rRNA + S-adenosyl-L-methionine = 2'-O-methylguanosine(1145) in 16S rRNA + S-adenosyl-L-homocysteine + H(+). Functionally, S-adenosyl-L-methionine-dependent 2'-O-ribose methyltransferase that catalyzes the formation of 2'-O-methylguanosine at position 1145 (Gm1145) in the 16S mitochondrial large subunit ribosomal RNA (mtLSU rRNA), a universally conserved modification in the peptidyl transferase domain of the mtLSU rRNA. This chain is rRNA methyltransferase 1, mitochondrial, found in Homo sapiens (Human).